A 149-amino-acid chain; its full sequence is Calmodulin (149 aa).

4 EF-hand domains span residues 8 to 43 (EQIA…LGQN), 44 to 79 (PTEA…KMKD), 81 to 116 (DSEE…LGEK), and 117 to 149 (LTDE…MMSK). The Ca(2+) site is built by aspartate 21, aspartate 23, aspartate 25, threonine 27, glutamate 32, aspartate 57, aspartate 59, asparagine 61, threonine 63, glutamate 68, aspartate 94, aspartate 96, asparagine 98, glutamate 105, aspartate 130, aspartate 132, aspartate 134, glutamine 136, and glutamate 141.

It belongs to the calmodulin family.

Calmodulin mediates the control of a large number of enzymes, ion channels and other proteins by Ca(2+). Among the enzymes to be stimulated by the calmodulin-Ca(2+) complex are a number of protein kinases and phosphatases. This Globisporangium splendens (Leaf rot fungus) protein is Calmodulin.